The chain runs to 728 residues: 1,4-alpha-glucan branching enzyme GlgB (728 aa).

The active-site Nucleophile is the D405. E458 serves as the catalytic Proton donor.

It belongs to the glycosyl hydrolase 13 family. GlgB subfamily. As to quaternary structure, monomer.

It carries out the reaction Transfers a segment of a (1-&gt;4)-alpha-D-glucan chain to a primary hydroxy group in a similar glucan chain.. Its pathway is glycan biosynthesis; glycogen biosynthesis. In terms of biological role, catalyzes the formation of the alpha-1,6-glucosidic linkages in glycogen by scission of a 1,4-alpha-linked oligosaccharide from growing alpha-1,4-glucan chains and the subsequent attachment of the oligosaccharide to the alpha-1,6 position. This Escherichia coli O139:H28 (strain E24377A / ETEC) protein is 1,4-alpha-glucan branching enzyme GlgB.